The primary structure comprises 289 residues: Phosphatidylserine decarboxylase proenzyme (289 aa).

Catalysis depends on charge relay system; for autoendoproteolytic cleavage activity residues D92, H149, and S254. The Schiff-base intermediate with substrate; via pyruvic acid; for decarboxylase activity role is filled by S254. A Pyruvic acid (Ser); by autocatalysis modification is found at S254.

It belongs to the phosphatidylserine decarboxylase family. PSD-B subfamily. Prokaryotic type I sub-subfamily. In terms of assembly, heterodimer of a large membrane-associated beta subunit and a small pyruvoyl-containing alpha subunit. It depends on pyruvate as a cofactor. Post-translationally, is synthesized initially as an inactive proenzyme. Formation of the active enzyme involves a self-maturation process in which the active site pyruvoyl group is generated from an internal serine residue via an autocatalytic post-translational modification. Two non-identical subunits are generated from the proenzyme in this reaction, and the pyruvate is formed at the N-terminus of the alpha chain, which is derived from the carboxyl end of the proenzyme. The autoendoproteolytic cleavage occurs by a canonical serine protease mechanism, in which the side chain hydroxyl group of the serine supplies its oxygen atom to form the C-terminus of the beta chain, while the remainder of the serine residue undergoes an oxidative deamination to produce ammonia and the pyruvoyl prosthetic group on the alpha chain. During this reaction, the Ser that is part of the protease active site of the proenzyme becomes the pyruvoyl prosthetic group, which constitutes an essential element of the active site of the mature decarboxylase.

It localises to the cell membrane. The enzyme catalyses a 1,2-diacyl-sn-glycero-3-phospho-L-serine + H(+) = a 1,2-diacyl-sn-glycero-3-phosphoethanolamine + CO2. Its pathway is phospholipid metabolism; phosphatidylethanolamine biosynthesis; phosphatidylethanolamine from CDP-diacylglycerol: step 2/2. Its function is as follows. Catalyzes the formation of phosphatidylethanolamine (PtdEtn) from phosphatidylserine (PtdSer). The protein is Phosphatidylserine decarboxylase proenzyme of Pseudomonas paraeruginosa (strain DSM 24068 / PA7) (Pseudomonas aeruginosa (strain PA7)).